We begin with the raw amino-acid sequence, 439 residues long: Large ribosomal subunit protein mL44 (439 aa).

Disordered regions lie at residues 39 to 73 and 247 to 282; these read QSTAALAQHDASHDLNNDRFPPLEPLPPAAESLPS and KAMEEQDQDKTPDEEEAEMVANEQDQDVSYDRYGNP. Basic and acidic residues predominate over residues 247–257; the sequence is KAMEEQDQDKT. Residues 258-274 are compositionally biased toward acidic residues; the sequence is PDEEEAEMVANEQDQDV.

The protein belongs to the ribonuclease III family. Mitochondrion-specific ribosomal protein mL44 subfamily. In terms of assembly, component of the mitochondrial large ribosomal subunit (mt-LSU). Mature N.crassa 74S mitochondrial ribosomes consist of a small (37S) and a large (54S) subunit. The 37S small subunit contains a 16S ribosomal RNA (16S mt-rRNA) and 32 different proteins. The 54S large subunit contains a 23S rRNA (23S mt-rRNA) and 42 different proteins. mL44 forms a heterodimer with mL57 and stabilizes rRNA expansion segments 1/2 at a membrane-facing protuberance close to the point of attachment of the ribosome to the translocon in the membrane.

It localises to the mitochondrion. Its function is as follows. Component of the mitochondrial ribosome (mitoribosome), a dedicated translation machinery responsible for the synthesis of mitochondrial genome-encoded proteins, including at least some of the essential transmembrane subunits of the mitochondrial respiratory chain. The mitoribosomes are attached to the mitochondrial inner membrane and translation products are cotranslationally integrated into the membrane. In Neurospora crassa (strain ATCC 24698 / 74-OR23-1A / CBS 708.71 / DSM 1257 / FGSC 987), this protein is Large ribosomal subunit protein mL44 (mrpl3).